The chain runs to 1053 residues: Carbamoyl phosphate synthase large chain (1053 aa).

The interval 1 to 397 is carboxyphosphate synthetic domain; it reads MPKNTSLKKV…GFKKALRSLD (397 aa). Arg-127, Arg-167, Gly-173, Gly-174, Glu-206, Val-208, Glu-213, Gly-239, Val-240, His-241, Gln-282, and Glu-294 together coordinate ATP. An ATP-grasp 1 domain is found at 131–323; that stretch reads KKLMLEIGEP…IARVAAKVAI (193 aa). Gln-282, Glu-294, and Asn-296 together coordinate Mg(2+). Mn(2+) contacts are provided by Gln-282, Glu-294, and Asn-296. The interval 398-530 is oligomerization domain; it reads TDIYRHTDLN…YSTWEQECEL (133 aa). Residues 531-919 are carbamoyl phosphate synthetic domain; that stretch reads TQSDRKKILI…YKASQAADNT (389 aa). In terms of domain architecture, ATP-grasp 2 spans 661 to 852; it reads SVLLDQNNIP…LAKIAAKLML (192 aa). ATP contacts are provided by Arg-697, Arg-736, Leu-738, Glu-743, Gly-768, Val-769, His-770, Ser-771, Gln-811, and Glu-823. Residues Gln-811, Glu-823, and Asn-825 each coordinate Mg(2+). The Mn(2+) site is built by Gln-811, Glu-823, and Asn-825. The MGS-like domain maps to 918–1053; it reads NTIPLKGNVF…TVEPLSHYHS (136 aa). Residues 920–1053 are allosteric domain; the sequence is IPLKGNVFIS…TVEPLSHYHS (134 aa).

Belongs to the CarB family. Composed of two chains; the small (or glutamine) chain promotes the hydrolysis of glutamine to ammonia, which is used by the large (or ammonia) chain to synthesize carbamoyl phosphate. Tetramer of heterodimers (alpha,beta)4. Mg(2+) is required as a cofactor. The cofactor is Mn(2+).

It carries out the reaction hydrogencarbonate + L-glutamine + 2 ATP + H2O = carbamoyl phosphate + L-glutamate + 2 ADP + phosphate + 2 H(+). It catalyses the reaction hydrogencarbonate + NH4(+) + 2 ATP = carbamoyl phosphate + 2 ADP + phosphate + 2 H(+). The protein operates within amino-acid biosynthesis; L-arginine biosynthesis; carbamoyl phosphate from bicarbonate: step 1/1. It functions in the pathway pyrimidine metabolism; UMP biosynthesis via de novo pathway; (S)-dihydroorotate from bicarbonate: step 1/3. Its function is as follows. Large subunit of the glutamine-dependent carbamoyl phosphate synthetase (CPSase). CPSase catalyzes the formation of carbamoyl phosphate from the ammonia moiety of glutamine, carbonate, and phosphate donated by ATP, constituting the first step of 2 biosynthetic pathways, one leading to arginine and/or urea and the other to pyrimidine nucleotides. The large subunit (synthetase) binds the substrates ammonia (free or transferred from glutamine from the small subunit), hydrogencarbonate and ATP and carries out an ATP-coupled ligase reaction, activating hydrogencarbonate by forming carboxy phosphate which reacts with ammonia to form carbamoyl phosphate. The chain is Carbamoyl phosphate synthase large chain from Methanocorpusculum labreanum (strain ATCC 43576 / DSM 4855 / Z).